A 1410-amino-acid polypeptide reads, in one-letter code: Endoribonuclease Dicer homolog 2a (1410 aa).

Over residues 1–15 (MGGPLTAAGGRGDGG) the composition is skewed to gly residues. Residues 1–30 (MGGPLTAAGGRGDGGAKAVEPLRPPPPPDP) are disordered. Residues 41 to 222 (ALERAVRGNT…HNYSKQISEI (182 aa)) form the Helicase ATP-binding domain. ATP is bound at residue 54–61 (LETGSGKT). The DECH box signature appears at 163-166 (DECH). The Helicase C-terminal domain maps to 388–561 (TLLQYRHMQD…DTYYRVESTR (174 aa)). The 87-residue stretch at 569-655 (SVPLIHFFCS…LPELDVPCDE (87 aa)) folds into the Dicer dsRNA-binding fold domain. A PAZ domain is found at 827–942 (KDIDLLQTKD…LPPELCRIIM (116 aa)). 2 consecutive RNase III domains span residues 969 to 1124 (SVKL…STAG) and 1161 to 1308 (VRSL…LDSK). Mg(2+) is bound by residues Glu-1200, Asp-1294, and Glu-1297. One can recognise a DRBM domain in the interval 1334 to 1400 (DPVKGLQEFC…SKAVLKDLIA (67 aa)).

The protein belongs to the helicase family. Dicer subfamily. As to quaternary structure, may interact with ARGONAUTE1 or PINHEAD through their common PAZ domains. Requires Mg(2+) as cofactor. Mn(2+) is required as a cofactor.

It is found in the nucleus. Probably involved in the RNA silencing pathway. May cleave double-stranded RNA to produce short 21-24 nucleotides (nt) RNAs which target the selective destruction of complementary RNAs. The sequence is that of Endoribonuclease Dicer homolog 2a (DCL2A) from Oryza sativa subsp. japonica (Rice).